We begin with the raw amino-acid sequence, 139 residues long: Putative nickel-responsive regulator (139 aa).

Ni(2+) contacts are provided by H79, H90, H92, and C98.

Belongs to the transcriptional regulatory CopG/NikR family. Requires Ni(2+) as cofactor.

In terms of biological role, transcriptional regulator. The protein is Putative nickel-responsive regulator of Trichlorobacter lovleyi (strain ATCC BAA-1151 / DSM 17278 / SZ) (Geobacter lovleyi).